The following is a 93-amino-acid chain: Large ribosomal subunit protein uL23cz/uL23cy (93 aa).

It belongs to the universal ribosomal protein uL23 family. Part of the 50S ribosomal subunit.

It localises to the plastid. Its subcellular location is the chloroplast. Functionally, binds to 23S rRNA. The chain is Large ribosomal subunit protein uL23cz/uL23cy (rpl23-A) from Acorus calamus (Sweet flag).